The sequence spans 593 residues: ATP-dependent lipid A-core flippase (593 aa).

6 helical membrane-spanning segments follow: residues 33-53, 75-95, 137-157, 164-184, 262-282, and 292-312; these read IGIVVLAVVTMGVVAATEAGI, WYVPIAVIGLALVRGVSQYTS, AIVFEVNQILSVLTGVMVTLV, IFLLGYLFYLNWRLTLIVAVI, QPLTQFLASIALAVVITIAVV, and GGFVAFVTSMLLVISPLKHLI. Residues 37–320 form the ABC transmembrane type-1 domain; sequence VLAVVTMGVV…LIDVNQPLQR (284 aa). In terms of domain architecture, ABC transporter spans 352-586; it reads IEFRAVSFDY…GGLYAHLHRI (235 aa). 386–393 serves as a coordination point for ATP; it reads GPSGSGKT.

This sequence belongs to the ABC transporter superfamily. Lipid exporter (TC 3.A.1.106) family. In terms of assembly, homodimer.

Its subcellular location is the cell inner membrane. It carries out the reaction ATP + H2O + lipid A-core oligosaccharideSide 1 = ADP + phosphate + lipid A-core oligosaccharideSide 2.. Involved in lipopolysaccharide (LPS) biosynthesis. Translocates lipid A-core from the inner to the outer leaflet of the inner membrane. Transmembrane domains (TMD) form a pore in the inner membrane and the ATP-binding domain (NBD) is responsible for energy generation. The polypeptide is ATP-dependent lipid A-core flippase (Burkholderia orbicola (strain AU 1054)).